A 203-amino-acid polypeptide reads, in one-letter code: Synaptosomal-associated protein 25-B (203 aa).

Residues 1-11 (MADEADMRNEL) show a composition bias toward basic and acidic residues. The tract at residues 1 to 25 (MADEADMRNELTDMQARADQLGDES) is disordered. 2 t-SNARE coiled-coil homology domains span residues 19-81 (DQLG…LTDL) and 137-199 (DARE…ATKM).

This sequence belongs to the SNAP-25 family.

It localises to the synapse. It is found in the synaptosome. The protein localises to the cell membrane. May play an important role in the synaptic function of specific neuronal systems. Associates with proteins involved in vesicle docking and membrane fusion. In Carassius auratus (Goldfish), this protein is Synaptosomal-associated protein 25-B (snap25b).